Reading from the N-terminus, the 220-residue chain is Ribosomal RNA large subunit methyltransferase E (220 aa).

Residues Gly-64, Trp-66, Asp-92, Asp-108, and Asp-133 each contribute to the S-adenosyl-L-methionine site. Lys-173 (proton acceptor) is an active-site residue.

This sequence belongs to the class I-like SAM-binding methyltransferase superfamily. RNA methyltransferase RlmE family.

Its subcellular location is the cytoplasm. The enzyme catalyses uridine(2552) in 23S rRNA + S-adenosyl-L-methionine = 2'-O-methyluridine(2552) in 23S rRNA + S-adenosyl-L-homocysteine + H(+). Its function is as follows. Specifically methylates the uridine in position 2552 of 23S rRNA at the 2'-O position of the ribose in the fully assembled 50S ribosomal subunit. This is Ribosomal RNA large subunit methyltransferase E from Acidovorax sp. (strain JS42).